Here is a 294-residue protein sequence, read N- to C-terminus: Diphthine synthase (294 aa).

S-adenosyl-L-methionine contacts are provided by residues aspartate 93, valine 96, serine 121–glycine 122, leucine 173, and alanine 220.

This sequence belongs to the diphthine synthase family. In terms of assembly, homodimer.

It carries out the reaction 2-[(3S)-amino-3-carboxypropyl]-L-histidyl-[translation elongation factor 2] + 3 S-adenosyl-L-methionine = diphthine-[translation elongation factor 2] + 3 S-adenosyl-L-homocysteine + 3 H(+). It functions in the pathway protein modification; peptidyl-diphthamide biosynthesis. Its function is as follows. S-adenosyl-L-methionine-dependent methyltransferase that catalyzes the trimethylation of the amino group of the modified target histidine residue in translation elongation factor 2 (EF-2), to form an intermediate called diphthine. The three successive methylation reactions represent the second step of diphthamide biosynthesis. This Aeropyrum pernix (strain ATCC 700893 / DSM 11879 / JCM 9820 / NBRC 100138 / K1) protein is Diphthine synthase (dphB).